A 254-amino-acid polypeptide reads, in one-letter code: MVSWIISRLVVLIFGTLYPAYSSYKAVKTKNVKEYVKWMMYWIVFAFFTTAETLTDIILSWFPFYFELKIAFVIWLLSPYTKGSSVLYRKFVHPTLSNKEKEIDEYITQARDKSYETMMRVGKRGLNLAANAAVTAAAKGQGVLSEKLRSFSMQDLTLIRDEDALPLQGPDGRLQPGPVGLLDTIEDLGDEPALSLRSSTSQPDPRTETSEDDLGDKAPKRTKPIKKVPRAEPPASKTLKTRPKKKSSGGGDSA.

Helical transmembrane passes span 1–21 (MVSW…YPAY) and 35–55 (YVKW…ETLT). Residue Ser-152 is modified to Phosphoserine. A disordered region spans residues 194–254 (LSLRSSTSQP…KKSSGGGDSA (61 aa)). The span at 205–219 (PRTETSEDDLGDKAP) shows a compositional bias: basic and acidic residues.

It belongs to the DP1 family. As to quaternary structure, interacts with odorant receptor proteins.

Its subcellular location is the membrane. Its function is as follows. Required for endoplasmic reticulum (ER) network formation, shaping and remodeling. May enhance the cell surface expression of odorant receptors. The sequence is that of Receptor expression-enhancing protein 2 (Reep2) from Mus musculus (Mouse).